The following is a 309-amino-acid chain: UDP-N-acetylenolpyruvoylglucosamine reductase (309 aa).

An FAD-binding PCMH-type domain is found at 25 to 188 (RVGGPADWLF…TSVTLQGNRE (164 aa)). Arg168 is an active-site residue. Positions 202–231 (AKRDATQPTKALTAGSTFRNPAGFSSTGQA) are disordered. The segment covering 207–231 (TQPTKALTAGSTFRNPAGFSSTGQA) has biased composition (polar residues). Ser217 functions as the Proton donor in the catalytic mechanism. The active site involves Glu299.

This sequence belongs to the MurB family. FAD is required as a cofactor.

The protein localises to the cytoplasm. It catalyses the reaction UDP-N-acetyl-alpha-D-muramate + NADP(+) = UDP-N-acetyl-3-O-(1-carboxyvinyl)-alpha-D-glucosamine + NADPH + H(+). It participates in cell wall biogenesis; peptidoglycan biosynthesis. Functionally, cell wall formation. This Jannaschia sp. (strain CCS1) protein is UDP-N-acetylenolpyruvoylglucosamine reductase.